A 371-amino-acid chain; its full sequence is Phospho-N-acetylmuramoyl-pentapeptide-transferase (371 aa).

11 helical membrane passes run 21–41, 46–66, 92–112, 119–139, 156–176, 182–202, 216–236, 241–261, 268–288, 296–316, and 349–369; these read NHIL…DFYY, LTIP…IGIP, PTMG…ILYF, IILT…IDDF, ILLQ…NNLI, IANK…FVLL, GLLS…ILIE, NSTL…FLFL, LFMG…IALI, LIMG…VSIF, and IVSS…IFLI.

It belongs to the glycosyltransferase 4 family. MraY subfamily. It depends on Mg(2+) as a cofactor.

It is found in the cell inner membrane. It carries out the reaction UDP-N-acetyl-alpha-D-muramoyl-L-alanyl-gamma-D-glutamyl-meso-2,6-diaminopimeloyl-D-alanyl-D-alanine + di-trans,octa-cis-undecaprenyl phosphate = di-trans,octa-cis-undecaprenyl diphospho-N-acetyl-alpha-D-muramoyl-L-alanyl-D-glutamyl-meso-2,6-diaminopimeloyl-D-alanyl-D-alanine + UMP. The protein operates within cell wall biogenesis; peptidoglycan biosynthesis. Its function is as follows. Catalyzes the initial step of the lipid cycle reactions in the biosynthesis of the cell wall peptidoglycan: transfers peptidoglycan precursor phospho-MurNAc-pentapeptide from UDP-MurNAc-pentapeptide onto the lipid carrier undecaprenyl phosphate, yielding undecaprenyl-pyrophosphoryl-MurNAc-pentapeptide, known as lipid I. The sequence is that of Phospho-N-acetylmuramoyl-pentapeptide-transferase from Prochlorococcus marinus (strain NATL2A).